The primary structure comprises 187 residues: Large ribosomal subunit protein bL32m (187 aa).

The Zn(2+) site is built by cysteine 109, cysteine 112, cysteine 122, and cysteine 125.

It belongs to the bacterial ribosomal protein bL32 family. In terms of assembly, component of the mitochondrial ribosome large subunit (39S) which comprises a 16S rRNA and about 50 distinct proteins. Post-translationally, MRPL32 precursor is processed by the m-AAA protease (composed of AFG3L2 and SPG7), which cleaves the N-terminal transit peptide. Cleavage by the m-AAA protease takes place prior to assembly into the large subunit, an essential step for mitochondrial ribosome (mitoribosome) assembly. Proper processing by the m-AAA protease is dependent on the zinc-binding region within the tightly folded C-terminal domain of MRPL32: zinc-dependent folding halts degradation initiated from the N-terminus and triggers the release of mature MRPL32.

It is found in the mitochondrion. Its function is as follows. Component of the mitochondrial large ribosomal subunit (mt-LSU). The mitochondrial ribosome (mitoribosome) is a large ribonucleoprotein complex responsible for the synthesis of proteins inside mitochondria. The protein is Large ribosomal subunit protein bL32m (Mrpl32) of Mus musculus (Mouse).